Here is a 444-residue protein sequence, read N- to C-terminus: Deoxyguanosinetriphosphate triphosphohydrolase-like protein (444 aa).

In terms of domain architecture, HD spans 59–250 (RLTHSLEVSQ…MELADDIAYA (192 aa)).

The protein belongs to the dGTPase family. Type 2 subfamily.

In Shewanella halifaxensis (strain HAW-EB4), this protein is Deoxyguanosinetriphosphate triphosphohydrolase-like protein.